The chain runs to 1167 residues: Pesticidal crystal protein Cry21Aa (1167 aa).

This sequence belongs to the delta endotoxin family.

Functionally, endotoxin with nematicidal activity. This Bacillus thuringiensis protein is Pesticidal crystal protein Cry21Aa (cry21Aa).